The chain runs to 591 residues: Transcription factor COE1 (591 aa).

An N-acetylmethionine modification is found at M1. A compositionally biased stretch (polar residues) spans 1–14; sequence MFGIQESIQRSGSS. A disordered region spans residues 1-21; that stretch reads MFGIQESIQRSGSSMKEEPLG. K16 participates in a covalent cross-link: Glycyl lysine isopeptide (Lys-Gly) (interchain with G-Cter in SUMO1); alternate. Residue K16 forms a Glycyl lysine isopeptide (Lys-Gly) (interchain with G-Cter in SUMO2); alternate linkage. The segment at 63-66 is interaction with DNA; the sequence is RKSN. The segment at 151–170 adopts a C5-type zinc-finger fold; the sequence is CRVLLTHEIMCSRCCDKKSC. Interaction with DNA stretches follow at residues 197–204 and 236–239; these read NCLKNAGN and NNSK. Residues 262 to 345 enclose the IPT/TIG domain; the sequence is PCIKAISPSE…KGTPGRFIYT (84 aa). Positions 457 to 480 are disordered; the sequence is GFTRNSSSVSPHGYVPSTTPQQTN.

Belongs to the COE family. As to quaternary structure, homodimer. Interacts with ZNF423 and ZNF521, leading to prevent EBF1 to bind DNA and activate target genes. Interacts with CCR4-NOT component CNOT3. In terms of assembly, (Microbial infection) Interacts with Epstein-barr virus protein EBNA2.

The protein resides in the nucleus. In terms of biological role, key pioneer transcription factor of B-cell specification and commitment. Recognizes variations of the palindromic sequence 5'-ATTCCCNNGGGAATT-3'. Operates in a transcription factor network to activate B-cell-specific genes and repress genes associated with alternative cell fates. For instance, positively regulates many B-cell specific genes including BCR or CD40 while repressing genes that direct cells into alternative lineages, including GATA3 and TCF7 for the T-cell lineage. In addition to its role during lymphopoiesis, controls the thermogenic gene program in adipocytes during development and in response to environmental cold. Its function is as follows. (Microbial infection) Acts as a chromatin anchor for Epstein-Barr virus EBNA2 to mediate the assembly of EBNA2 chromatin complexes in B-cells. In addition, binds to the viral LMP1 proximal promoter and promotes its expression during latency. The protein is Transcription factor COE1 (EBF1) of Homo sapiens (Human).